The sequence spans 197 residues: Guanylate kinase (197 aa).

Residues 1 to 30 (MAATPRGTSPVPPDARPRLTVLSGPSGVGK) form a disordered region. Residues 17–197 (PRLTVLSGPS…RELLALTNVV (181 aa)) enclose the Guanylate kinase-like domain. 24–31 (GPSGVGKS) contributes to the ATP binding site.

The protein belongs to the guanylate kinase family.

It is found in the cytoplasm. It catalyses the reaction GMP + ATP = GDP + ADP. In terms of biological role, essential for recycling GMP and indirectly, cGMP. This is Guanylate kinase (gmk) from Streptomyces coelicolor (strain ATCC BAA-471 / A3(2) / M145).